Consider the following 638-residue polypeptide: Phosphomethylpyrimidine synthase (638 aa).

Substrate-binding positions include N243, M272, Y301, H337, 357–359 (SRG), 398–401 (DGLR), and E437. Residue H441 participates in Zn(2+) binding. Y464 lines the substrate pocket. H505 contacts Zn(2+). [4Fe-4S] cluster-binding residues include C585, C588, and C593.

The protein belongs to the ThiC family. As to quaternary structure, homodimer. [4Fe-4S] cluster is required as a cofactor.

The enzyme catalyses 5-amino-1-(5-phospho-beta-D-ribosyl)imidazole + S-adenosyl-L-methionine = 4-amino-2-methyl-5-(phosphooxymethyl)pyrimidine + CO + 5'-deoxyadenosine + formate + L-methionine + 3 H(+). It functions in the pathway cofactor biosynthesis; thiamine diphosphate biosynthesis. In terms of biological role, catalyzes the synthesis of the hydroxymethylpyrimidine phosphate (HMP-P) moiety of thiamine from aminoimidazole ribotide (AIR) in a radical S-adenosyl-L-methionine (SAM)-dependent reaction. The protein is Phosphomethylpyrimidine synthase of Azoarcus sp. (strain BH72).